We begin with the raw amino-acid sequence, 337 residues long: GTPase Obg (337 aa).

One can recognise an Obg domain in the interval M1–M159. The OBG-type G domain maps to A160 to S323. Residues G166–S173, F191–V195, D213–G216, T280–D283, and S304–V306 each bind GTP. S173 and T193 together coordinate Mg(2+).

The protein belongs to the TRAFAC class OBG-HflX-like GTPase superfamily. OBG GTPase family. As to quaternary structure, monomer. It depends on Mg(2+) as a cofactor.

The protein resides in the cytoplasm. In terms of biological role, an essential GTPase which binds GTP, GDP and possibly (p)ppGpp with moderate affinity, with high nucleotide exchange rates and a fairly low GTP hydrolysis rate. Plays a role in control of the cell cycle, stress response, ribosome biogenesis and in those bacteria that undergo differentiation, in morphogenesis control. The sequence is that of GTPase Obg from Pelodictyon phaeoclathratiforme (strain DSM 5477 / BU-1).